The sequence spans 143 residues: MAKKIVGFIKLQVPAGKANPSPPIGPALGQRGLNIMEFCKAFNAKTQGMEPGLPIPVVITAFADKSFTFIMKTPPATVLIKKASGVQKGSAKPHTDKVGTLTRAQAEEIAKTKQPDLTAADLDAAVRTIAGSARSMGITVEGV.

It belongs to the universal ribosomal protein uL11 family. In terms of assembly, part of the ribosomal stalk of the 50S ribosomal subunit. Interacts with L10 and the large rRNA to form the base of the stalk. L10 forms an elongated spine to which L12 dimers bind in a sequential fashion forming a multimeric L10(L12)X complex. One or more lysine residues are methylated.

In terms of biological role, forms part of the ribosomal stalk which helps the ribosome interact with GTP-bound translation factors. This Bordetella parapertussis (strain 12822 / ATCC BAA-587 / NCTC 13253) protein is Large ribosomal subunit protein uL11.